Here is a 462-residue protein sequence, read N- to C-terminus: Putative E3 ubiquitin-protein ligase XBAT35 (462 aa).

3 ANK repeats span residues Ser6–Trp35, Glu39–Ala69, and His75–Val104. Disordered regions lie at residues His277–Ser341 and Ser356–Arg402. Polar residues predominate over residues Ser304–His317. Residues Ser319–Ser341 show a composition bias toward low complexity. The segment at Cys411–Arg450 adopts an RING-type zinc-finger fold.

It catalyses the reaction S-ubiquitinyl-[E2 ubiquitin-conjugating enzyme]-L-cysteine + [acceptor protein]-L-lysine = [E2 ubiquitin-conjugating enzyme]-L-cysteine + N(6)-ubiquitinyl-[acceptor protein]-L-lysine.. It participates in protein modification; protein ubiquitination. No E3 ubiquitin-protein ligase activity observed when associated with the E2 enzyme UBC8 in vitro. This Arabidopsis thaliana (Mouse-ear cress) protein is Putative E3 ubiquitin-protein ligase XBAT35 (XBAT35).